The following is a 225-amino-acid chain: UPF0758 protein NMC1174 (225 aa).

In terms of domain architecture, MPN spans 102–224; it reads VLSDPDTVAD…VRSFRQLGLM (123 aa). Zn(2+) is bound by residues H173, H175, and D186. The JAMM motif signature appears at 173–186; it reads HNHPGGSPEPSQED.

This sequence belongs to the UPF0758 family.

The chain is UPF0758 protein NMC1174 from Neisseria meningitidis serogroup C / serotype 2a (strain ATCC 700532 / DSM 15464 / FAM18).